Consider the following 383-residue polypeptide: S-adenosylmethionine synthase (383 aa).

Histidine 15 contributes to the ATP binding site. Aspartate 17 is a binding site for Mg(2+). Glutamate 43 lines the K(+) pocket. Residues glutamate 56 and glutamine 99 each contribute to the L-methionine site. The interval 99–109 (QSPDINQGVDR) is flexible loop. ATP-binding positions include 164-166 (DAK), 230-231 (RF), aspartate 239, 245-246 (RK), alanine 262, and lysine 266. Aspartate 239 serves as a coordination point for L-methionine. Position 270 (lysine 270) interacts with L-methionine.

The protein belongs to the AdoMet synthase family. Homotetramer; dimer of dimers. The cofactor is Mg(2+). K(+) is required as a cofactor.

The protein localises to the cytoplasm. The enzyme catalyses L-methionine + ATP + H2O = S-adenosyl-L-methionine + phosphate + diphosphate. It functions in the pathway amino-acid biosynthesis; S-adenosyl-L-methionine biosynthesis; S-adenosyl-L-methionine from L-methionine: step 1/1. Catalyzes the formation of S-adenosylmethionine (AdoMet) from methionine and ATP. The overall synthetic reaction is composed of two sequential steps, AdoMet formation and the subsequent tripolyphosphate hydrolysis which occurs prior to release of AdoMet from the enzyme. This Shewanella amazonensis (strain ATCC BAA-1098 / SB2B) protein is S-adenosylmethionine synthase.